A 701-amino-acid chain; its full sequence is Polyribonucleotide nucleotidyltransferase (701 aa).

The Mg(2+) site is built by Asp-487 and Asp-493. The KH domain maps to 554–613; the sequence is PTMLQMKIDSDKIRDVIGKGGATIRAICEETKASIDIEDDGSVKIYGETKEAAEAAKQRV. In terms of domain architecture, S1 motif spans 623–691; that stretch reads GKIYVGKVER…NRGRIKLSIK (69 aa).

This sequence belongs to the polyribonucleotide nucleotidyltransferase family. As to quaternary structure, component of the RNA degradosome, which is a multiprotein complex involved in RNA processing and mRNA degradation. Requires Mg(2+) as cofactor.

The protein resides in the cytoplasm. The enzyme catalyses RNA(n+1) + phosphate = RNA(n) + a ribonucleoside 5'-diphosphate. In terms of biological role, involved in mRNA degradation. Catalyzes the phosphorolysis of single-stranded polyribonucleotides processively in the 3'- to 5'-direction. This chain is Polyribonucleotide nucleotidyltransferase, found in Pseudomonas paraeruginosa (strain DSM 24068 / PA7) (Pseudomonas aeruginosa (strain PA7)).